Consider the following 233-residue polypeptide: MELLRTVSDTKRTFYALHTRPINTIYRRVVEELMVEMHLLSVNVDFSYNPIYALGVVTTFDRFMEGYQPERDKESIFSAICQAVEQEPQRYRQDAERLQAVAQSLPVNDLVAWLSQANHLQQDADLQAQLQAIANNSNFKYSRLFAIGLFTLLEQSNPDLVKDEKQRTEALKSIAAGLHLSDDKFSKDLELYRSNLDKMTQALAVMADMLTADRKKREQRQQQASTPVAPPNE.

Positions Asp-183–Ala-204 form a coiled coil. Positions Ala-212–Glu-233 are disordered.

This sequence belongs to the THF1 family.

In terms of biological role, may be involved in photosynthetic membrane biogenesis. This is Protein Thf1 from Nostoc sp. (strain PCC 7120 / SAG 25.82 / UTEX 2576).